The primary structure comprises 177 residues: Alpha-crystallin A chain (177 aa).

M1 bears the N-acetylmethionine mark. Positions 52–162 constitute a sHSP domain; it reads VFRNFLDSGI…NWQDRPIPVS (111 aa). Zn(2+) contacts are provided by H100 and E102. A disulfide bridge connects residues C131 and C142. The disordered stretch occupies residues 146 to 177; the sequence is TRPGDDSNWQDRPIPVSREEKQGTQPEIRADP. Residue S162 is glycosylated (O-linked (GlcNAc) serine). The span at 162–177 shows a compositional bias: basic and acidic residues; sequence SREEKQGTQPEIRADP.

This sequence belongs to the small heat shock protein (HSP20) family. In terms of assembly, heteropolymer composed of three CRYAA and one CRYAB subunits. Inter-subunit bridging via zinc ions enhances stability, which is crucial as there is no protein turn over in the lens. Can also form homodimers and homotetramers (dimers of dimers) which serve as the building blocks of homooligomers.

The protein localises to the cytoplasm. The protein resides in the nucleus. Contributes to the transparency and refractive index of the lens. May act as a chaperone, preventing aggregation of various proteins under a wide range of stress conditions. This is Alpha-crystallin A chain (cryaa) from Squalus acanthias (Spiny dogfish).